The chain runs to 143 residues: Lysozyme C (143 aa).

Residues 1-15 (MRCLLLLLLVPVPGA) form the signal peptide. Residues 16 to 143 (KVFERCEWAR…LSSYVAGCGV (128 aa)) enclose the C-type lysozyme domain. 4 cysteine pairs are disulfide-bonded: C21–C141, C45–C129, C79–C94, and C90–C108. Residues E50 and D67 contribute to the active site.

This sequence belongs to the glycosyl hydrolase 22 family. Monomer.

Its subcellular location is the secreted. It catalyses the reaction Hydrolysis of (1-&gt;4)-beta-linkages between N-acetylmuramic acid and N-acetyl-D-glucosamine residues in a peptidoglycan and between N-acetyl-D-glucosamine residues in chitodextrins.. In terms of biological role, lysozymes have primarily a bacteriolytic function; those in tissues and body fluids are associated with the monocyte-macrophage system and enhance the activity of immunoagents. The sequence is that of Lysozyme C (lys) from Scophthalmus maximus (Turbot).